The primary structure comprises 70 residues: uncharacterized protein (70 aa).

This is an uncharacterized protein from Saccharomyces cerevisiae (strain ATCC 204508 / S288c) (Baker's yeast).